Here is a 330-residue protein sequence, read N- to C-terminus: Holliday junction branch migration complex subunit RuvB (330 aa).

The large ATPase domain (RuvB-L) stretch occupies residues 1 to 181 (MEDRLVGCRL…FGVINKLELY (181 aa)). ATP is bound by residues L20, R21, G62, K65, T66, T67, 128-130 (EDY), R171, Y181, and R218. Position 66 (T66) interacts with Mg(2+). The tract at residues 182-252 (SVEELGQIVK…IARTGLEALE (71 aa)) is small ATPAse domain (RuvB-S). Residues 255–330 (EIGLDAVDRN…AYEHFGLKYE (76 aa)) are head domain (RuvB-H). Residues K310 and R315 each coordinate DNA.

It belongs to the RuvB family. As to quaternary structure, homohexamer. Forms an RuvA(8)-RuvB(12)-Holliday junction (HJ) complex. HJ DNA is sandwiched between 2 RuvA tetramers; dsDNA enters through RuvA and exits via RuvB. An RuvB hexamer assembles on each DNA strand where it exits the tetramer. Each RuvB hexamer is contacted by two RuvA subunits (via domain III) on 2 adjacent RuvB subunits; this complex drives branch migration. In the full resolvosome a probable DNA-RuvA(4)-RuvB(12)-RuvC(2) complex forms which resolves the HJ.

The protein localises to the cytoplasm. It carries out the reaction ATP + H2O = ADP + phosphate + H(+). Its function is as follows. The RuvA-RuvB-RuvC complex processes Holliday junction (HJ) DNA during genetic recombination and DNA repair, while the RuvA-RuvB complex plays an important role in the rescue of blocked DNA replication forks via replication fork reversal (RFR). RuvA specifically binds to HJ cruciform DNA, conferring on it an open structure. The RuvB hexamer acts as an ATP-dependent pump, pulling dsDNA into and through the RuvAB complex. RuvB forms 2 homohexamers on either side of HJ DNA bound by 1 or 2 RuvA tetramers; 4 subunits per hexamer contact DNA at a time. Coordinated motions by a converter formed by DNA-disengaged RuvB subunits stimulates ATP hydrolysis and nucleotide exchange. Immobilization of the converter enables RuvB to convert the ATP-contained energy into a lever motion, pulling 2 nucleotides of DNA out of the RuvA tetramer per ATP hydrolyzed, thus driving DNA branch migration. The RuvB motors rotate together with the DNA substrate, which together with the progressing nucleotide cycle form the mechanistic basis for DNA recombination by continuous HJ branch migration. Branch migration allows RuvC to scan DNA until it finds its consensus sequence, where it cleaves and resolves cruciform DNA. This chain is Holliday junction branch migration complex subunit RuvB, found in Acetivibrio thermocellus (strain ATCC 27405 / DSM 1237 / JCM 9322 / NBRC 103400 / NCIMB 10682 / NRRL B-4536 / VPI 7372) (Clostridium thermocellum).